The chain runs to 576 residues: K(+)/H(+) antiporter NhaP2 (576 aa).

Transmembrane regions (helical) follow at residues 6 to 26 (INSF…LSPM), 34 to 54 (ILLI…GGIL), 58 to 78 (YSTA…DGGM), 87 to 107 (VALW…TSIT), 109 to 129 (MMAA…GAIV), 163 to 183 (PMAV…DTEM), 185 to 205 (FSFM…LGLG), 219 to 239 (LADG…YAAS), 242 to 262 (LGGS…NKPT), 271 to 291 (VLDG…GLLL), 299 to 319 (ILIP…PVAV), 335 to 355 (WFIS…VFPM), and 359 to 379 (LPGA…SLLV). Residues 405–486 (SGVEIYPSSE…LEALSNLFSQ (82 aa)) form the RCK C-terminal domain.

Belongs to the monovalent cation:proton antiporter 1 (CPA1) transporter (TC 2.A.36) family. NhaP2 subfamily.

It localises to the cell inner membrane. It carries out the reaction K(+)(in) + H(+)(out) = K(+)(out) + H(+)(in). K(+)/H(+) antiporter that extrudes potassium in exchange for external protons and maintains the internal concentration of potassium under toxic levels. This is K(+)/H(+) antiporter NhaP2 from Shewanella baltica (strain OS195).